A 157-amino-acid chain; its full sequence is MKELKVSKINNGTVIDHLPPGRALKVLRLLGIDGSEGFMVLIAMNVYSKKLGGRKDIVKIENVYLSDEQTKALALIAPTATINIIRNGEVVEKRGVTLPDVVEGILTCPNSSCISRSKREPIKSKFLVVSKRPLKLKCHYCGEIIEEKEVSNYINLR.

Cys-108, Cys-113, Cys-138, and Cys-141 together coordinate Zn(2+).

Belongs to the PyrI family. As to quaternary structure, contains catalytic and regulatory chains. It depends on Zn(2+) as a cofactor.

Its function is as follows. Involved in allosteric regulation of aspartate carbamoyltransferase. The sequence is that of Aspartate carbamoyltransferase regulatory chain from Ignicoccus hospitalis (strain KIN4/I / DSM 18386 / JCM 14125).